A 523-amino-acid polypeptide reads, in one-letter code: ATP synthase subunit alpha (523 aa).

Gly-173–Thr-180 is a binding site for ATP.

Belongs to the ATPase alpha/beta chains family. In terms of assembly, F-type ATPases have 2 components, CF(1) - the catalytic core - and CF(0) - the membrane proton channel. CF(1) has five subunits: alpha(3), beta(3), gamma(1), delta(1), epsilon(1). CF(0) has three main subunits: a(1), b(2) and c(9-12). The alpha and beta chains form an alternating ring which encloses part of the gamma chain. CF(1) is attached to CF(0) by a central stalk formed by the gamma and epsilon chains, while a peripheral stalk is formed by the delta and b chains.

It localises to the cell membrane. The catalysed reaction is ATP + H2O + 4 H(+)(in) = ADP + phosphate + 5 H(+)(out). Functionally, produces ATP from ADP in the presence of a proton gradient across the membrane. The alpha chain is a regulatory subunit. This is ATP synthase subunit alpha from Streptomyces griseus subsp. griseus (strain JCM 4626 / CBS 651.72 / NBRC 13350 / KCC S-0626 / ISP 5235).